Reading from the N-terminus, the 347-residue chain is Integrin beta-1-binding protein 2 (347 aa).

Positions 5, 10, 24, and 27 each coordinate Zn(2+). The CHORD 1 domain occupies 5–64 (CRNKGCGQHFDPNTNLPDSCCHHPGVPIFHDALKGWSCCRKRTVDFSEFLNIKGCTMGPH). An SH3-binding motif is present at residues 28–31 (PGVP). Zn(2+) is bound by residues cysteine 42, cysteine 43, cysteine 59, and histidine 64. Positions 70 to 78 (PEAPQPEGP) match the SH3-binding motif. The Zn(2+) site is built by cysteine 149 and cysteine 154. Positions 149–208 (CQNPGCDAVYQGPESDATPCTYHPGAPRFHEGMKSWSCCGIQTLDFGAFLAQPGCRVGRH) constitute a CHORD 2 domain. The SH2-binding motif lies at 158-161 (YQGP). Residues cysteine 168 and histidine 171 each contribute to the Zn(2+) site. The SH3-binding signature appears at 172 to 175 (PGAP). Positions 186, 187, 203, and 208 each coordinate Zn(2+). Residues 215–304 (PASCRHDWHQ…ADPGSWAQLE (90 aa)) enclose the CS domain. The SH2-binding motif lies at 234–237 (YGQI). Positions 319–347 (LEMDEEESDDSDDDLSWTEEEEEEEAMGE) are disordered. The segment covering 320–347 (EMDEEESDDSDDDLSWTEEEEEEEAMGE) has biased composition (acidic residues).

Interacts with beta-1 integrin subunit. This interaction is regulated by divalent cations, and it occurs only in absence of calcium. As to expression, expressed in skeletal and cardiac muscles but not in other tissues.

Its function is as follows. May play a role during maturation and/or organization of muscles cells. The polypeptide is Integrin beta-1-binding protein 2 (ITGB1BP2) (Homo sapiens (Human)).